A 702-amino-acid polypeptide reads, in one-letter code: Pseudouridylate synthase PUS7L (702 aa).

At Ser-79 the chain carries Phosphoserine. Residues 84-116 are disordered; that stretch reads NSEGAADLPGCSDGDRSHQSDSEKENSVNSVTS. A compositionally biased stretch (basic and acidic residues) spans 96–109; the sequence is DGDRSHQSDSEKEN. Residue Asp-339 is the Nucleophile of the active site. The region spanning 424–646 is the TRUD domain; sequence GFVNYYGPQR…PGCYRHIVKH (223 aa).

It belongs to the pseudouridine synthase TruD family.

The catalysed reaction is a uridine in mRNA = a pseudouridine in mRNA. Pseudouridine synthase that catalyzes pseudouridylation of mRNAs. The sequence is that of Pseudouridylate synthase PUS7L from Mus musculus (Mouse).